The chain runs to 324 residues: Hydroxylase/desaturase CTB9 (324 aa).

Over residues 1–11 (MTSTITTTETL) the composition is skewed to polar residues. 2 disordered regions span residues 1-33 (MTST…KELP) and 288-308 (TARR…EPRA).

It belongs to the asaB hydroxylase/desaturase family.

It functions in the pathway mycotoxin biosynthesis. Functionally, hydroxylase/desaturase; part of the gene cluster that mediates the biosynthesis of cercosporin, a light-activated, non-host-selective toxin. The perylenequinone chromophore of cercosporin absorbs light energy to attain an electronically-activated triplet state and produces active oxygen species such as the hydroxyl radical, superoxide, hydrogen peroxide or singlet oxygen upon reaction with oxygen molecules. These reactive oxygen species cause damage to various cellular components including lipids, proteins and nucleic acids. The first step of cercosporin biosynthesis is performed by the polyketide synthase CTB1 which catalyzes the formation of nor-toralactone. The starter unit acyltransferase (SAT) domain of CTB1 initiates polyketide extension by the selective utilization of acetyl-CoA, which is elongated to the heptaketide in the beta-ketoacyl synthase (KS) domain by successive condensations with six malonyl units introduced by the malonyl acyltransferase (MAT) domain. The product template (PT) domain catalyzes C4-C9 and C2-C11 aldol cyclizations and dehydrations to a trihydroxynaphthalene, which is thought to be delivered to the thioesterase (TE) domain for product release. The bifunctional enzyme CTB3 then methylates nor-toralactone to toralactone before conducting an unusual oxidative aromatic ring opening. The O-methyltransferase CTB2 further methylates the nascent OH-6 of the CBT3 product, blocking further oxidation at this site before the reductase CTB6 reduces the 2-oxopropyl ketone at position C7, giving naphthalene. The FAD-dependent monooxygenase CTB5 in concert with the multicopper oxidase CTB12 are responsible for homodimerization of naphthalene with CTB7 installing the dioxepine moiety, finally producing cercosporin. The fasciclin domain-containing protein CTB11 might act with CTB5 and CTB12 whereas the roles of CTB9 and CTB10 have still to be elucidated. This is Hydroxylase/desaturase CTB9 from Cercospora beticola (Sugarbeet leaf spot fungus).